The primary structure comprises 192 residues: Protein GrpE (192 aa).

It belongs to the GrpE family. Homodimer.

The protein localises to the cytoplasm. Participates actively in the response to hyperosmotic and heat shock by preventing the aggregation of stress-denatured proteins, in association with DnaK and GrpE. It is the nucleotide exchange factor for DnaK and may function as a thermosensor. Unfolded proteins bind initially to DnaJ; upon interaction with the DnaJ-bound protein, DnaK hydrolyzes its bound ATP, resulting in the formation of a stable complex. GrpE releases ADP from DnaK; ATP binding to DnaK triggers the release of the substrate protein, thus completing the reaction cycle. Several rounds of ATP-dependent interactions between DnaJ, DnaK and GrpE are required for fully efficient folding. In Neisseria gonorrhoeae (strain NCCP11945), this protein is Protein GrpE.